A 472-amino-acid polypeptide reads, in one-letter code: tRNA-2-methylthio-N(6)-dimethylallyladenosine synthase (472 aa).

The MTTase N-terminal domain maps to 22–138 (RSYWITTFGC…LETLLQQVDS (117 aa)). Residues C31, C67, C101, C173, C177, and C180 each coordinate [4Fe-4S] cluster. Residues 159–396 (RDSAICGWVN…NALVERNARE (238 aa)) enclose the Radical SAM core domain. The 69-residue stretch at 399–467 (IRYQGRTEEV…SFSLSGTPLP (69 aa)) folds into the TRAM domain.

It belongs to the methylthiotransferase family. MiaB subfamily. In terms of assembly, monomer. Requires [4Fe-4S] cluster as cofactor.

Its subcellular location is the cytoplasm. It carries out the reaction N(6)-dimethylallyladenosine(37) in tRNA + (sulfur carrier)-SH + AH2 + 2 S-adenosyl-L-methionine = 2-methylsulfanyl-N(6)-dimethylallyladenosine(37) in tRNA + (sulfur carrier)-H + 5'-deoxyadenosine + L-methionine + A + S-adenosyl-L-homocysteine + 2 H(+). Functionally, catalyzes the methylthiolation of N6-(dimethylallyl)adenosine (i(6)A), leading to the formation of 2-methylthio-N6-(dimethylallyl)adenosine (ms(2)i(6)A) at position 37 in tRNAs that read codons beginning with uridine. This is tRNA-2-methylthio-N(6)-dimethylallyladenosine synthase from Synechococcus sp. (strain CC9902).